Here is a 158-residue protein sequence, read N- to C-terminus: Small ribosomal subunit protein uS9 (158 aa).

The protein belongs to the universal ribosomal protein uS9 family.

The protein is Small ribosomal subunit protein uS9 of Brucella abortus (strain S19).